Here is a 395-residue protein sequence, read N- to C-terminus: Protein PIN-LIKES 7 (395 aa).

Residues 1-8 (MGFLELLE) are Lumenal-facing. The helical transmembrane segment at 9–29 (VASMPIVQVLLISVLGAFLAT) threads the bilayer. The Cytoplasmic segment spans residues 30–45 (DYCSLLSADTRRSVNK). A helical transmembrane segment spans residues 46 to 66 (LVFVVFTPCIMFANLAETVTL). The Lumenal portion of the chain corresponds to 67-73 (QDIISWW). The chain crosses the membrane as a helical span at residues 74–94 (FMPINVGITFLVGGILGWLVV). Topologically, residues 95–106 (KLLNPKPQLHGL) are cytoplasmic. Residues 107–127 (IIATCASGNMGNLMLILVPAI) form a helical membrane-spanning segment. Residues 128 to 142 (CDEEGSPFGNRSVCR) lie on the Lumenal side of the membrane. A helical transmembrane segment spans residues 143–163 (SIGLSYASFSMALGGFYIWTY). Residues 164–232 (SYQLVRSSAT…KDLLHQILEE (69 aa)) are Cytoplasmic-facing. A helical transmembrane segment spans residues 233–253 (LFAPPTIGAILGFVFGATNWL). The Lumenal segment spans residues 254 to 272 (RNLIIGENAPLRVIQDSVK). The helical transmembrane segment at 273–293 (LLGEGTIPCITLILGGNLIQG) threads the bilayer. The Cytoplasmic segment spans residues 294–302 (LRSSAVKKS). A helical membrane pass occupies residues 303-323 (VIVGVIIVRYILLPVVGVGVV). Residues 324–340 (QLAGNLGYLPPDPLFRY) lie on the Lumenal side of the membrane. A helical transmembrane segment spans residues 341-361 (VLMLQFALPPAMNISTMAQLF). The Cytoplasmic segment spans residues 362-369 (DVAQDECS). The helical transmembrane segment at 370-390 (VIFLWTYLVASLALTVWSTIF) threads the bilayer. Over 391 to 395 (LSILS) the chain is Lumenal.

Belongs to the auxin efflux carrier (TC 2.A.69.2) family. Expressed in seedlings, rosette and cauline leaves, stems and flowers.

It is found in the endoplasmic reticulum membrane. Its function is as follows. Involved in cellular auxin homeostasis by regulating auxin metabolism. Regulates intracellular auxin accumulation at the endoplasmic reticulum and thus auxin availability for nuclear auxin signaling. This Arabidopsis thaliana (Mouse-ear cress) protein is Protein PIN-LIKES 7.